The primary structure comprises 259 residues: Thiazole synthase (259 aa).

The Schiff-base intermediate with DXP role is filled by Lys95. Residues Gly156, 182–183 (AG), and 204–205 (NT) each bind 1-deoxy-D-xylulose 5-phosphate.

Belongs to the ThiG family. Homotetramer. Forms heterodimers with either ThiH or ThiS.

The protein resides in the cytoplasm. The enzyme catalyses [ThiS sulfur-carrier protein]-C-terminal-Gly-aminoethanethioate + 2-iminoacetate + 1-deoxy-D-xylulose 5-phosphate = [ThiS sulfur-carrier protein]-C-terminal Gly-Gly + 2-[(2R,5Z)-2-carboxy-4-methylthiazol-5(2H)-ylidene]ethyl phosphate + 2 H2O + H(+). It functions in the pathway cofactor biosynthesis; thiamine diphosphate biosynthesis. Its function is as follows. Catalyzes the rearrangement of 1-deoxy-D-xylulose 5-phosphate (DXP) to produce the thiazole phosphate moiety of thiamine. Sulfur is provided by the thiocarboxylate moiety of the carrier protein ThiS. In vitro, sulfur can be provided by H(2)S. This Baumannia cicadellinicola subsp. Homalodisca coagulata protein is Thiazole synthase.